The chain runs to 289 residues: Probable ABC transporter permease protein BRA0749/BS1330_II0742 (289 aa).

6 consecutive transmembrane segments (helical) span residues 9 to 29, 70 to 90, 99 to 119, 144 to 166, 213 to 233, and 260 to 280; these read FLILPSLLLAAVVIFWPVVHL, VWTVAVVGGALVLSIPVAIIL, VARVIIMLPWAVSLTMTAIVW, IQWLASAATAFPMQILVGILVTV, IAIVLNTIYVFNSFPIIWVMT, and EASAVSLIMLAILLVFTVIYI. An ABC transmembrane type-1 domain is found at 65-279; the sequence is LWRTAVWTVA…AILLVFTVIY (215 aa).

The protein belongs to the binding-protein-dependent transport system permease family. In terms of assembly, the complex is composed of two ATP-binding proteins (BRA0745), two transmembrane proteins (BRA0749) and a solute-binding protein (BRA0748).

The protein resides in the cell inner membrane. In terms of biological role, probably part of an ABC transporter complex. Probably responsible for the translocation of the substrate across the membrane. The polypeptide is Probable ABC transporter permease protein BRA0749/BS1330_II0742 (Brucella suis biovar 1 (strain 1330)).